The sequence spans 724 residues: Catalase-peroxidase (724 aa).

A cross-link (tryptophyl-tyrosyl-methioninium (Trp-Tyr) (with M-252)) is located at residues 98–226; the sequence is WHSAGSYRIA…LAAVMMGLIY (129 aa). The Proton acceptor role is filled by H99. The segment at residues 226 to 252 is a cross-link (tryptophyl-tyrosyl-methioninium (Tyr-Met) (with W-98)); it reads YVNPEGVDGHPDPQKTANDVRVTFARM. H267 contributes to the heme b binding site.

The protein belongs to the peroxidase family. Peroxidase/catalase subfamily. As to quaternary structure, homodimer or homotetramer. It depends on heme b as a cofactor. Post-translationally, formation of the three residue Trp-Tyr-Met cross-link is important for the catalase, but not the peroxidase activity of the enzyme.

The catalysed reaction is H2O2 + AH2 = A + 2 H2O. It carries out the reaction 2 H2O2 = O2 + 2 H2O. Functionally, bifunctional enzyme with both catalase and broad-spectrum peroxidase activity. The sequence is that of Catalase-peroxidase from Edwardsiella tarda.